The primary structure comprises 261 residues: Putative [LysW]-aminoadipate/[LysW]-glutamate kinase (261 aa).

Residues 35–36 (GG), arginine 62, and asparagine 162 each bind substrate.

It belongs to the acetylglutamate kinase family. LysZ subfamily.

The protein localises to the cytoplasm. The enzyme catalyses [amino-group carrier protein]-C-terminal-N-(1,4-dicarboxybutan-1-yl)-L-glutamine + ATP = [amino-group carrier protein]-C-terminal-N-(1-carboxy-5-phosphooxy-5-oxopentan-1-yl)-L-glutamine + ADP. It catalyses the reaction [amino-group carrier protein]-C-terminal-gamma-(L-glutamyl)-L-glutamate + ATP = [amino-group carrier protein]-C-terminal-gamma-(5-phospho-L-glutamyl)-L-glutamate + ADP. The protein operates within amino-acid biosynthesis; L-lysine biosynthesis via AAA pathway; L-lysine from L-alpha-aminoadipate (Thermus route): step 2/5. It participates in amino-acid biosynthesis; L-arginine biosynthesis. Its function is as follows. Involved in both the arginine and lysine biosynthetic pathways. Phosphorylates the LysW-bound precursors glutamate (for arginine biosynthesis), respectively alpha-aminoadipate (for lysine biosynthesis). The chain is Putative [LysW]-aminoadipate/[LysW]-glutamate kinase from Pyrobaculum aerophilum (strain ATCC 51768 / DSM 7523 / JCM 9630 / CIP 104966 / NBRC 100827 / IM2).